Reading from the N-terminus, the 248-residue chain is Probable transcriptional regulatory protein RHE_CH03475 (248 aa).

It belongs to the TACO1 family.

It localises to the cytoplasm. The sequence is that of Probable transcriptional regulatory protein RHE_CH03475 from Rhizobium etli (strain ATCC 51251 / DSM 11541 / JCM 21823 / NBRC 15573 / CFN 42).